The sequence spans 1052 residues: Focal adhesion kinase 1 (1052 aa).

The tract at residues 1-27 (MAAAYLDPNLNHTPNSSTKTHLGTGME) is disordered. A2 carries the N-acetylalanine modification. Y5 carries the post-translational modification Phosphotyrosine. A compositionally biased stretch (polar residues) spans 10–21 (LNHTPNSSTKTH). At T13 the chain carries Phosphothreonine. Phosphoserine occurs at positions 29 and 54. One can recognise an FERM domain in the interval 35-355 (RVLKVFHYFE…GYCRLVNGTS (321 aa)). K152 is covalently cross-linked (Glycyl lysine isopeptide (Lys-Gly) (interchain with G-Cter in SUMO)). Residue Y397 is modified to Phosphotyrosine; by autocatalysis. Residue Y407 is modified to Phosphotyrosine. Positions 422–680 (IELGRCIGEG…ELKAQLSTIL (259 aa)) constitute a Protein kinase domain. ATP-binding positions include 428-434 (IGEGQFG), K454, and 500-502 (ELC). D546 (proton acceptor) is an active-site residue. Position 570 is a phosphotyrosine (Y570). 2 positions are modified to phosphotyrosine; by RET and SRC: Y576 and Y577. A Phosphoserine modification is found at S580. Residues 684–697 (KAQQEERMRMESRR) are compositionally biased toward basic and acidic residues. Disordered regions lie at residues 684-734 (KAQQ…PSPQ) and 839-922 (LSRG…RSND). The tract at residues 707-1052 (GSDEAPPKPS…LKMLGQTRPH (346 aa)) is interaction with TGFB1I1. A Phosphoserine modification is found at S722. S732 carries the post-translational modification Phosphoserine; by CDK5. A compositionally biased stretch (basic and acidic residues) spans 839 to 849 (LSRGSIDREDG). S843 is modified (phosphoserine). Residue Y861 is modified to Phosphotyrosine. Pro residues predominate over residues 869-880 (PAAPPKKPPRPG). S887 and S910 each carry phosphoserine. An interaction with ARHGEF28 region spans residues 912 to 1052 (PPTANLDRSN…LKMLGQTRPH (141 aa)). At T914 the chain carries Phosphothreonine. Y925 carries the phosphotyrosine modification.

The protein belongs to the protein kinase superfamily. Tyr protein kinase family. FAK subfamily. As to quaternary structure, interacts (via first Pro-rich region) with CAS family members (via SH3 domain), including BCAR1, BCAR3, and CASS4. Interacts with NEDD9 (via SH3 domain). Interacts with GIT1. Interacts with SORBS1. Interacts with ARHGEF28. Interacts with SHB. Part of a complex composed of THSD1, PTK2/FAK1, TLN1 and VCL. Interacts with PXN and TLN1. Interacts with STAT1. Interacts with DCC. Interacts with WASL. Interacts with ARHGEF7. Interacts with GRB2 and GRB7. Component of a complex that contains at least FER, CTTN and PTK2/FAK1. Interacts with BMX. Interacts with TGFB1I1. Interacts with STEAP4. Interacts with ZFYVE21. Interacts with ESR1. Interacts with PIK3R1 or PIK3R2. Interacts with SRC, FGR, FLT4 and RET. Interacts with EPHA2 in resting cells; activation of EPHA2 recruits PTPN11, leading to dephosphorylation of PTK2/FAK1 and dissociation of the complex. Interacts with EPHA1 (kinase activity-dependent). Interacts with CD4; this interaction requires the presence of HIV-1 gp120. Interacts with PIAS1. Interacts with ARHGAP26 and SHC1. Interacts with RB1CC1; this inhibits PTK2/FAK1 activity and activation of downstream signaling pathways. Interacts with P53/TP53 and MDM2. Interacts with LPXN (via LD motif 3). Interacts with MISP. Interacts with CIB1 isoform 2. Interacts with CD36. Interacts with EMP2; regulates PTK2 activation and localization. Interacts with DSCAM. Interacts with AMBRA1. Interacts (when tyrosine-phosphorylated) with tensin TNS1; the interaction is increased by phosphorylation of TNS1. Post-translationally, phosphorylated on tyrosine residues upon activation, e.g. upon integrin signaling. Tyr-397 is the major autophosphorylation site, but other kinases can also phosphorylate this residue. Phosphorylation at Tyr-397 promotes interaction with SRC and SRC family members, leading to phosphorylation at Tyr-576, Tyr-577 and at additional tyrosine residues. FGR promotes phosphorylation at Tyr-397 and Tyr-576. FER promotes phosphorylation at Tyr-577, Tyr-861 and Tyr-925, even when cells are not adherent. Tyr-397, Tyr-576 and Ser-722 are phosphorylated only when cells are adherent. Phosphorylation at Tyr-397 is important for interaction with BMX, PIK3R1 and SHC1. Phosphorylation at Tyr-925 is important for interaction with GRB2. Dephosphorylated by PTPN11; PTPN11 is recruited to PTK2 via EPHA2 (tyrosine phosphorylated). Microtubule-induced dephosphorylation at Tyr-397 is crucial for the induction of focal adhesion disassembly; this dephosphorylation could be catalyzed by PTPN11 and regulated by ZFYVE21. Phosphorylation on tyrosine residues is enhanced by NTN1. Sumoylated; this enhances autophosphorylation. Detected in B and T-lymphocytes. Isoform 1 and isoform 6 are detected in lung fibroblasts (at protein level). Ubiquitous. Expressed in epithelial cells (at protein level).

The protein resides in the cell junction. Its subcellular location is the focal adhesion. The protein localises to the cell membrane. It is found in the cytoplasm. It localises to the perinuclear region. The protein resides in the cell cortex. Its subcellular location is the cytoskeleton. The protein localises to the microtubule organizing center. It is found in the centrosome. It localises to the nucleus. The protein resides in the cilium basal body. The enzyme catalyses L-tyrosyl-[protein] + ATP = O-phospho-L-tyrosyl-[protein] + ADP + H(+). Its activity is regulated as follows. Subject to autoinhibition, mediated by interactions between the FERM domain and the kinase domain. Activated by autophosphorylation at Tyr-397. This promotes interaction with SRC and phosphorylation at Tyr-576 and Tyr-577 in the kinase activation loop. Phosphorylation at Tyr-576 and Tyr-577 is required for maximal kinase activity. Inhibited by TAC544, TAE226, PF-573,228 and PF-562,271. Its function is as follows. Non-receptor protein-tyrosine kinase that plays an essential role in regulating cell migration, adhesion, spreading, reorganization of the actin cytoskeleton, formation and disassembly of focal adhesions and cell protrusions, cell cycle progression, cell proliferation and apoptosis. Required for early embryonic development and placenta development. Required for embryonic angiogenesis, normal cardiomyocyte migration and proliferation, and normal heart development. Regulates axon growth and neuronal cell migration, axon branching and synapse formation; required for normal development of the nervous system. Plays a role in osteogenesis and differentiation of osteoblasts. Functions in integrin signal transduction, but also in signaling downstream of numerous growth factor receptors, G-protein coupled receptors (GPCR), EPHA2, netrin receptors and LDL receptors. Forms multisubunit signaling complexes with SRC and SRC family members upon activation; this leads to the phosphorylation of additional tyrosine residues, creating binding sites for scaffold proteins, effectors and substrates. Regulates numerous signaling pathways. Promotes activation of phosphatidylinositol 3-kinase and the AKT1 signaling cascade. Promotes activation of MAPK1/ERK2, MAPK3/ERK1 and the MAP kinase signaling cascade. Promotes localized and transient activation of guanine nucleotide exchange factors (GEFs) and GTPase-activating proteins (GAPs), and thereby modulates the activity of Rho family GTPases. Signaling via CAS family members mediates activation of RAC1. Phosphorylates NEDD9 following integrin stimulation. Recruits the ubiquitin ligase MDM2 to P53/TP53 in the nucleus, and thereby regulates P53/TP53 activity, P53/TP53 ubiquitination and proteasomal degradation. Phosphorylates SRC; this increases SRC kinase activity. Phosphorylates ACTN1, ARHGEF7, GRB7, RET and WASL. Promotes phosphorylation of PXN and STAT1; most likely PXN and STAT1 are phosphorylated by a SRC family kinase that is recruited to autophosphorylated PTK2/FAK1, rather than by PTK2/FAK1 itself. Promotes phosphorylation of BCAR1; GIT2 and SHC1; this requires both SRC and PTK2/FAK1. Promotes phosphorylation of BMX and PIK3R1. Isoform 6 (FRNK) does not contain a kinase domain and inhibits PTK2/FAK1 phosphorylation and signaling. Its enhanced expression can attenuate the nuclear accumulation of LPXN and limit its ability to enhance serum response factor (SRF)-dependent gene transcription. Isoform 6 (FRNK) does not contain a kinase domain and inhibits PTK2/FAK1 phosphorylation and signaling. Its enhanced expression can attenuate the nuclear accumulation of LPXN and limit its ability to enhance serum response factor (SRF)-dependent gene transcription. The sequence is that of Focal adhesion kinase 1 from Homo sapiens (Human).